Consider the following 180-residue polypeptide: Large ribosomal subunit protein uL5 (180 aa).

This sequence belongs to the universal ribosomal protein uL5 family. Part of the 50S ribosomal subunit; part of the 5S rRNA/L5/L18/L25 subcomplex. Contacts the 5S rRNA and the P site tRNA. Forms a bridge to the 30S subunit in the 70S ribosome.

Its function is as follows. This is one of the proteins that bind and probably mediate the attachment of the 5S RNA into the large ribosomal subunit, where it forms part of the central protuberance. In the 70S ribosome it contacts protein S13 of the 30S subunit (bridge B1b), connecting the 2 subunits; this bridge is implicated in subunit movement. Contacts the P site tRNA; the 5S rRNA and some of its associated proteins might help stabilize positioning of ribosome-bound tRNAs. The chain is Large ribosomal subunit protein uL5 from Streptococcus pyogenes serotype M1.